Here is a 347-residue protein sequence, read N- to C-terminus: VIP36-like protein (347 aa).

An N-terminal signal peptide occupies residues 1–43 (MAAASRPSWWQRWRRRAWARDGAKLLLFLLLLGSGPGPRHVRA). Residues 44–312 (GQAVEYLKRE…VPPTPLSGLA (269 aa)) lie on the Lumenal side of the membrane. Residues 48–273 (EYLKREHSLS…DVISLKLFEL (226 aa)) form the L-type lectin-like domain. Residues Ser92 and Asp127 each coordinate a carbohydrate. Asp158, Tyr160, and Asn162 together coordinate Ca(2+). 160 to 162 (YPN) contributes to the a carbohydrate binding site. Asn180 carries N-linked (GlcNAc...) asparagine glycosylation. His187 lines the a carbohydrate pocket. A Ca(2+)-binding site is contributed by Asp190. Cys199 and Cys236 are disulfide-bonded. 257–259 (GDL) serves as a coordination point for a carbohydrate. A helical membrane pass occupies residues 313 to 335 (LFLIVFFSLVFSVFAIVIGIILY). At 336 to 347 (NKWQDQSRKRFY) the chain is on the cytoplasmic side. An Endoplasmic reticulum retention signal motif is present at residues 343-345 (RKR).

Its subcellular location is the endoplasmic reticulum membrane. The protein localises to the golgi apparatus membrane. May be involved in the regulation of export from the endoplasmic reticulum of a subset of glycoproteins. May function as a regulator of ERGIC-53. This chain is VIP36-like protein (Lman2l), found in Mus musculus (Mouse).